Reading from the N-terminus, the 468-residue chain is Glutamine synthetase (468 aa).

One can recognise a GS beta-grasp domain in the interval 14–98 (HDVKYVDLRF…ILCDVYEPST (85 aa)). The region spanning 106–468 (PRGIAKAAEK…PIEYKMYYSV (363 aa)) is the GS catalytic domain. Mg(2+) is bound by residues Glu131 and Glu133. Position 209 (Glu209) interacts with ATP. The Mg(2+) site is built by Glu214 and Glu221. L-glutamate contacts are provided by residues 265-266 (NG) and Gly266. His270 contributes to the Mg(2+) binding site. ATP is bound by residues 272-274 (HQS) and Ser274. Residues Arg322, Glu328, and Arg340 each contribute to the L-glutamate site. ATP-binding residues include Arg340, Arg345, and Lys353. Mg(2+) is bound at residue Glu358. L-glutamate is bound at residue Arg360. Tyr398 carries the post-translational modification O-AMP-tyrosine.

The protein belongs to the glutamine synthetase family. In terms of assembly, oligomer of 12 subunits arranged in the form of two hexameric ring. Requires Mg(2+) as cofactor.

It is found in the cytoplasm. The enzyme catalyses L-glutamate + NH4(+) + ATP = L-glutamine + ADP + phosphate + H(+). Its activity is regulated as follows. The activity of this enzyme could be controlled by adenylation under conditions of abundant glutamine. Functionally, catalyzes the ATP-dependent biosynthesis of glutamine from glutamate and ammonia. The protein is Glutamine synthetase of Azospirillum brasilense.